We begin with the raw amino-acid sequence, 218 residues long: Recombination protein RecR (218 aa).

A C4-type zinc finger spans residues 56 to 71 (CRICCNISRDEVCRIC). A Toprim domain is found at 79 to 195 (GLICVVEEPK…VVSRLASGMP (117 aa)).

The protein belongs to the RecR family.

In terms of biological role, may play a role in DNA repair. It seems to be involved in an RecBC-independent recombinational process of DNA repair. It may act with RecF and RecO. This chain is Recombination protein RecR, found in Corynebacterium efficiens (strain DSM 44549 / YS-314 / AJ 12310 / JCM 11189 / NBRC 100395).